A 273-amino-acid polypeptide reads, in one-letter code: Imidazole glycerol phosphate synthase subunit HisF (273 aa).

Residues aspartate 11 and aspartate 134 contribute to the active site.

This sequence belongs to the HisA/HisF family. Heterodimer of HisH and HisF.

The protein localises to the cytoplasm. The catalysed reaction is 5-[(5-phospho-1-deoxy-D-ribulos-1-ylimino)methylamino]-1-(5-phospho-beta-D-ribosyl)imidazole-4-carboxamide + L-glutamine = D-erythro-1-(imidazol-4-yl)glycerol 3-phosphate + 5-amino-1-(5-phospho-beta-D-ribosyl)imidazole-4-carboxamide + L-glutamate + H(+). It functions in the pathway amino-acid biosynthesis; L-histidine biosynthesis; L-histidine from 5-phospho-alpha-D-ribose 1-diphosphate: step 5/9. Functionally, IGPS catalyzes the conversion of PRFAR and glutamine to IGP, AICAR and glutamate. The HisF subunit catalyzes the cyclization activity that produces IGP and AICAR from PRFAR using the ammonia provided by the HisH subunit. The sequence is that of Imidazole glycerol phosphate synthase subunit HisF from Methanosarcina mazei (strain ATCC BAA-159 / DSM 3647 / Goe1 / Go1 / JCM 11833 / OCM 88) (Methanosarcina frisia).